Consider the following 513-residue polypeptide: MMVDSRLLVSDRINGTTNKMNGALDHSDQPDPDAIKMFVGQIPRSWSEKELKDLFEPYGAVYQINVLRDRSQNPPQSKGCCFVTFYTRKAALEAQNALHNIKTLPGMHHPIQMKPADSEKSNAVEDRKLFIGMVSKKCNENDIRVMFSPFGQIEECRILRGPDGLSRGCAFVTFSTRAMAQNAIKAMHQSQTMEGCSSPIVVKFADTQKDKEQRRLQQQLAQQMQQLNTATWGNLTGLGALTPQYLALLQQATSSSNLGAFSGIQQMAGMNALQLQNLATLAAAAAAAQTSATTTNANPLSTTTSALGALTSPVAASTANSSAGAAMNSLTSLGTLQGLAGATVGLNNINALAGTVNIAQMLSGMAALNGGLGATGLTNGTAGTMDALTQAYSGIQQYAAAALPTLYSQSLLQQQSAAGSQKEGPEGANLFIYHLPQEFGDQDILQMFMPFGNVISAKVFIDKQTNLSKCFGFVSYDNPVSAQAAIQAMNGFQIGMKRLKVQLKRSKNDSKPY.

3 consecutive RRM domains span residues 35–118 (IKMF…PADS), 127–207 (RKLF…FADT), and 428–506 (ANLF…LKRS).

It belongs to the CELF/BRUNOL family.

It is found in the nucleus. Its subcellular location is the cytoplasm. In terms of biological role, RNA-binding protein implicated in the regulation of several post-transcriptional events. May be involved in pre-mRNA alternative splicing, mRNA translation repression and stability. This chain is CUGBP Elav-like family member 2 (celf2), found in Xenopus tropicalis (Western clawed frog).